A 129-amino-acid chain; its full sequence is Ribosome-binding factor A (129 aa).

This sequence belongs to the RbfA family. As to quaternary structure, monomer. Binds 30S ribosomal subunits, but not 50S ribosomal subunits or 70S ribosomes.

It is found in the cytoplasm. In terms of biological role, one of several proteins that assist in the late maturation steps of the functional core of the 30S ribosomal subunit. Associates with free 30S ribosomal subunits (but not with 30S subunits that are part of 70S ribosomes or polysomes). Required for efficient processing of 16S rRNA. May interact with the 5'-terminal helix region of 16S rRNA. This chain is Ribosome-binding factor A, found in Ectopseudomonas mendocina (strain ymp) (Pseudomonas mendocina).